Here is a 152-residue protein sequence, read N- to C-terminus: Small ribosomal subunit protein uS8m (152 aa).

This sequence belongs to the universal ribosomal protein uS8 family. As to quaternary structure, component of the mitochondrial small ribosomal subunit (mt-SSU). Mature yeast 74S mitochondrial ribosomes consist of a small (37S) and a large (54S) subunit. The 37S small subunit contains a 15S ribosomal RNA (15S mt-rRNA) and at least 32 different proteins. The 54S large subunit contains a 21S rRNA (21S mt-rRNA) and at least 45 different proteins.

It is found in the mitochondrion. Functionally, component of the mitochondrial ribosome (mitoribosome), a dedicated translation machinery responsible for the synthesis of mitochondrial genome-encoded proteins, including at least some of the essential transmembrane subunits of the mitochondrial respiratory chain. The mitoribosomes are attached to the mitochondrial inner membrane and translation products are cotranslationally integrated into the membrane. This chain is Small ribosomal subunit protein uS8m (mrps8), found in Schizosaccharomyces pombe (strain 972 / ATCC 24843) (Fission yeast).